The primary structure comprises 154 residues: Yop proteins translocation protein O (154 aa).

The interval 132-154 is disordered; that stretch reads ELNQQHYQEEQEQEEFLQHHRNA.

Belongs to the SpaM family.

Its function is as follows. Component of the yop secretion machinery. The chain is Yop proteins translocation protein O (yscO) from Yersinia pseudotuberculosis serotype I (strain IP32953).